Consider the following 397-residue polypeptide: 1-deoxy-D-xylulose 5-phosphate reductoisomerase (397 aa).

Residues Thr10, Gly11, Ser12, Ile13, Gly36, Asn38, and Asn128 each coordinate NADPH. Lys129 serves as a coordination point for 1-deoxy-D-xylulose 5-phosphate. Residue Glu130 coordinates NADPH. Asp154 contacts Mn(2+). Ser155, Glu156, Ser180, and His203 together coordinate 1-deoxy-D-xylulose 5-phosphate. Residue Glu156 participates in Mn(2+) binding. Position 209 (Gly209) interacts with NADPH. 1-deoxy-D-xylulose 5-phosphate is bound by residues Asn221, Lys222, and Glu225. Glu225 is a Mn(2+) binding site.

This sequence belongs to the DXR family. The cofactor is Mg(2+). Requires Mn(2+) as cofactor.

It catalyses the reaction 2-C-methyl-D-erythritol 4-phosphate + NADP(+) = 1-deoxy-D-xylulose 5-phosphate + NADPH + H(+). It participates in isoprenoid biosynthesis; isopentenyl diphosphate biosynthesis via DXP pathway; isopentenyl diphosphate from 1-deoxy-D-xylulose 5-phosphate: step 1/6. Catalyzes the NADPH-dependent rearrangement and reduction of 1-deoxy-D-xylulose-5-phosphate (DXP) to 2-C-methyl-D-erythritol 4-phosphate (MEP). The polypeptide is 1-deoxy-D-xylulose 5-phosphate reductoisomerase (Solibacter usitatus (strain Ellin6076)).